Consider the following 140-residue polypeptide: Nucleoside diphosphate kinase (140 aa).

Residues lysine 11, phenylalanine 59, arginine 87, threonine 93, arginine 104, and asparagine 114 each contribute to the ATP site. Histidine 117 serves as the catalytic Pros-phosphohistidine intermediate.

The protein belongs to the NDK family. In terms of assembly, homotetramer. The cofactor is Mg(2+).

The protein resides in the cytoplasm. It catalyses the reaction a 2'-deoxyribonucleoside 5'-diphosphate + ATP = a 2'-deoxyribonucleoside 5'-triphosphate + ADP. It carries out the reaction a ribonucleoside 5'-diphosphate + ATP = a ribonucleoside 5'-triphosphate + ADP. Major role in the synthesis of nucleoside triphosphates other than ATP. The ATP gamma phosphate is transferred to the NDP beta phosphate via a ping-pong mechanism, using a phosphorylated active-site intermediate. The chain is Nucleoside diphosphate kinase from Sinorhizobium medicae (strain WSM419) (Ensifer medicae).